The following is a 285-amino-acid chain: Inositol monophosphatase 1 (285 aa).

Residues Glu73, Asp93, Ile95, and Asp96 each coordinate Mg(2+). Glu73 contributes to the substrate binding site. Residues 95–98 (IDGT), 198–200 (GTA), Glu217, and Asp224 contribute to the substrate site. Position 224 (Asp224) interacts with Mg(2+).

This sequence belongs to the inositol monophosphatase superfamily. As to quaternary structure, homodimer. Mg(2+) serves as cofactor.

Its subcellular location is the cytoplasm. It carries out the reaction a myo-inositol phosphate + H2O = myo-inositol + phosphate. The catalysed reaction is 1D-myo-inositol 1-phosphate + H2O = myo-inositol + phosphate. It catalyses the reaction 1D-myo-inositol 2-phosphate + H2O = myo-inositol + phosphate. The enzyme catalyses 1D-myo-inositol 3-phosphate + H2O = myo-inositol + phosphate. It carries out the reaction 1D-myo-inositol 4-phosphate + H2O = myo-inositol + phosphate. The catalysed reaction is 1D-myo-inositol 5-phosphate + H2O = myo-inositol + phosphate. It catalyses the reaction 1D-myo-inositol 6-phosphate + H2O = myo-inositol + phosphate. The enzyme catalyses scyllo-inositol 1-phosphate + H2O = scyllo-inositol + phosphate. It carries out the reaction alpha-D-galactose 1-phosphate + H2O = D-galactose + phosphate. The catalysed reaction is alpha-D-glucose 1-phosphate + H2O = D-glucose + phosphate. It catalyses the reaction D-glucose 6-phosphate + H2O = D-glucose + phosphate. The enzyme catalyses beta-D-fructose 1-phosphate + H2O = D-fructose + phosphate. It carries out the reaction glycerol 2-phosphate + H2O = glycerol + phosphate. The catalysed reaction is adenosine 2'-phosphate + H2O = adenosine + phosphate. It participates in polyol metabolism; myo-inositol biosynthesis; myo-inositol from D-glucose 6-phosphate: step 2/2. With respect to regulation, inhibited by Li(+), Ca(2+) and Mn(2+), but also by Mg(2+) at concentrations above 3 mM. In terms of biological role, phosphatase involved in the dephosphorylation of myo-inositol monophosphate to generate myo-inositol. Is also able to dephosphorylate scyllo-inositol-phosphate, myo-inositol 1,4-diphosphate, scyllo-inositol-1,3-diphosphate and scyllo-inositol-1,4-diphosphate. Also dephosphorylates in vitro other sugar-phosphates including D-galactose-1-phosphate, glucose-1-phosphate, glucose-6-phosphate, fructose-1-phosphate, beta-glycerophosphate and 2'-AMP. Responsible for the provision of inositol required for synthesis of phosphatidylinositol and polyphosphoinositides, and involved in maintaining normal brain function. Has been implicated as the pharmacological target for lithium Li(+) action in brain. The polypeptide is Inositol monophosphatase 1 (impa1) (Xenopus laevis (African clawed frog)).